A 514-amino-acid polypeptide reads, in one-letter code: Glucose-6-phosphate 1-dehydrogenase 2 (514 aa).

The NADP(+) site is built by R69 and K176. Residues H206, K210, E244, and D263 each contribute to the substrate site. H268 acts as the Proton acceptor in catalysis. Substrate is bound at residue K366.

Belongs to the glucose-6-phosphate dehydrogenase family.

The catalysed reaction is D-glucose 6-phosphate + NADP(+) = 6-phospho-D-glucono-1,5-lactone + NADPH + H(+). It participates in carbohydrate degradation; pentose phosphate pathway; D-ribulose 5-phosphate from D-glucose 6-phosphate (oxidative stage): step 1/3. Catalyzes the oxidation of glucose 6-phosphate to 6-phosphogluconolactone. This Mycobacterium bovis (strain ATCC BAA-935 / AF2122/97) protein is Glucose-6-phosphate 1-dehydrogenase 2.